A 262-amino-acid polypeptide reads, in one-letter code: Glutamate racemase (262 aa).

Residues 7-8 (DS) and 39-40 (YG) contribute to the substrate site. The active-site Proton donor/acceptor is the Cys70. 71-72 (NT) lines the substrate pocket. Cys182 serves as the catalytic Proton donor/acceptor. 183–184 (TH) lines the substrate pocket.

This sequence belongs to the aspartate/glutamate racemases family.

It catalyses the reaction L-glutamate = D-glutamate. The protein operates within cell wall biogenesis; peptidoglycan biosynthesis. Functionally, provides the (R)-glutamate required for cell wall biosynthesis. The sequence is that of Glutamate racemase from Campylobacter concisus (strain 13826).